The following is a 159-amino-acid chain: Ribosomal RNA large subunit methyltransferase H (159 aa).

S-adenosyl-L-methionine contacts are provided by residues Gly-108 and 127 to 132 (FSKMTF).

This sequence belongs to the RNA methyltransferase RlmH family. Homodimer.

It is found in the cytoplasm. The catalysed reaction is pseudouridine(1915) in 23S rRNA + S-adenosyl-L-methionine = N(3)-methylpseudouridine(1915) in 23S rRNA + S-adenosyl-L-homocysteine + H(+). Its function is as follows. Specifically methylates the pseudouridine at position 1915 (m3Psi1915) in 23S rRNA. In Clostridium beijerinckii (strain ATCC 51743 / NCIMB 8052) (Clostridium acetobutylicum), this protein is Ribosomal RNA large subunit methyltransferase H.